The primary structure comprises 105 residues: Phosphoribosyl-ATP pyrophosphatase (105 aa).

The protein belongs to the PRA-PH family.

It is found in the cytoplasm. It catalyses the reaction 1-(5-phospho-beta-D-ribosyl)-ATP + H2O = 1-(5-phospho-beta-D-ribosyl)-5'-AMP + diphosphate + H(+). The protein operates within amino-acid biosynthesis; L-histidine biosynthesis; L-histidine from 5-phospho-alpha-D-ribose 1-diphosphate: step 2/9. The sequence is that of Phosphoribosyl-ATP pyrophosphatase from Ruegeria pomeroyi (strain ATCC 700808 / DSM 15171 / DSS-3) (Silicibacter pomeroyi).